A 1037-amino-acid chain; its full sequence is Presequence protease, mitochondrial (1037 aa).

The N-terminal 28 residues, 1–28 (MWRCGGRQGLCVLRRLSGGHAHHRAWRW), are a transit peptide targeting the mitochondrion. Histidine 104 lines the Zn(2+) pocket. Catalysis depends on glutamate 107, which acts as the Proton acceptor. Histidine 108 provides a ligand contact to Zn(2+). Cysteine 119 and cysteine 556 are joined by a disulfide. Glutamate 180 is an active-site residue. Zn(2+) is bound at residue glutamate 205. The residue at position 759 (lysine 759) is an N6-acetyllysine. Lysine 770 carries the N6-acetyllysine; alternate modification. Position 770 is an N6-succinyllysine; alternate (lysine 770). The span at 804–814 (GRSKKERRPVR) shows a compositional bias: basic residues. Residues 804–834 (GRSKKERRPVRPHTVEKPVPSSSGGDAHVPH) form a disordered region. Lysine 849 bears the N6-succinyllysine mark. Position 884 is an N6-acetyllysine (lysine 884). Lysine 946 bears the N6-succinyllysine mark.

The protein belongs to the peptidase M16 family. PreP subfamily. Monomer and homodimer; homodimerization is induced by binding of the substrate. It depends on Zn(2+) as a cofactor. A disulfide bond locks the enzyme in the closed conformation preventing substrate entry into the catalytic chamber. In terms of tissue distribution, widely expressed. Expressed at higher level in muscle and heart compared to brain, pancreas, liver, lung and placenta.

It is found in the mitochondrion. It localises to the mitochondrion matrix. Its activity is regulated as follows. Mainly exists in a closed and catalytically competent conformation but a closed-to-open switch allows substrate entry into the catalytic chamber. Substrate binding induces closure and dimerization. A disulfide bond may lock the enzyme in a closed conformation preventing substrate entry into the catalytic chamber, participating in redox regulation of the enzyme. Inhibited by metal-chelating agents. Inhibited by nickel and zinc excess, and slightly activated by manganese. Its function is as follows. Metalloendopeptidase of the mitochondrial matrix that functions in peptide cleavage and degradation rather than in protein processing. Has an ATP-independent activity. Specifically cleaves peptides in the range of 5 to 65 residues. Shows a preference for cleavage after small polar residues and before basic residues, but without any positional preference. Degrades the transit peptides of mitochondrial proteins after their cleavage. Also degrades other unstructured peptides. It is also able to degrade amyloid-beta protein 40, one of the peptides produced by APP processing, when it accumulates in mitochondrion. It is a highly efficient protease, at least toward amyloid-beta protein 40. Cleaves that peptide at a specific position and is probably not processive, releasing digested peptides intermediates that can be further cleaved subsequently. It is also able to degrade amyloid-beta protein 42. This chain is Presequence protease, mitochondrial, found in Homo sapiens (Human).